The following is a 417-amino-acid chain: D-amino acid dehydrogenase (417 aa).

Residue 3-17 coordinates FAD; that stretch reads VIVIGSGVIGLTSAW.

The protein belongs to the DadA oxidoreductase family. The cofactor is FAD.

The catalysed reaction is a D-alpha-amino acid + A + H2O = a 2-oxocarboxylate + AH2 + NH4(+). Its pathway is amino-acid degradation; D-alanine degradation; NH(3) and pyruvate from D-alanine: step 1/1. Oxidative deamination of D-amino acids. This is D-amino acid dehydrogenase from Vibrio atlanticus (strain LGP32) (Vibrio splendidus (strain Mel32)).